The chain runs to 248 residues: Agamous-like MADS-box protein AGL1 (248 aa).

The region spanning 18–72 (RGKIEIKRIENTTNRQVTFCKRRNGLLKKAYELSVLCDAEVALVIFSTRGRLYEY) is the MADS-box domain. The K-box domain maps to 102-192 (TQYYQQEASK…RAKIAEGARL (91 aa)).

As to quaternary structure, interacts with AGL15 and AGL16.

The protein localises to the nucleus. Functionally, probable transcription factor. Interacts genetically with TT16/AGL32 in a partially antagonistic manner during flower development. Is essential for the coordination of cell divisions in ovule, seed coat development and endosperm formation. The chain is Agamous-like MADS-box protein AGL1 (AGL1) from Arabidopsis thaliana (Mouse-ear cress).